The primary structure comprises 218 residues: Glycerol-3-phosphate acyltransferase (218 aa).

The next 5 helical transmembrane spans lie at 5-25 (ALGMIIFAYLCGSISSAILIC), 53-73 (LAAASVLICDVLKGMIPVWLA), 80-100 (PFYLGIVAIAACLGHIYPVFF), 115-135 (IAAIGWDLSGLIAGTWLLTVL), and 138-158 (GYSSLGAIISALLAPFYVWWF).

Belongs to the PlsY family. As to quaternary structure, probably interacts with PlsX.

It localises to the cell inner membrane. The catalysed reaction is an acyl phosphate + sn-glycerol 3-phosphate = a 1-acyl-sn-glycero-3-phosphate + phosphate. It participates in lipid metabolism; phospholipid metabolism. Its function is as follows. Catalyzes the transfer of an acyl group from acyl-phosphate (acyl-PO(4)) to glycerol-3-phosphate (G3P) to form lysophosphatidic acid (LPA). This enzyme utilizes acyl-phosphate as fatty acyl donor, but not acyl-CoA or acyl-ACP. This chain is Glycerol-3-phosphate acyltransferase, found in Proteus mirabilis (strain HI4320).